The sequence spans 940 residues: Isoleucine--tRNA ligase (940 aa).

Residues 58–68 carry the 'HIGH' region motif; sequence PYANGDIHIGH. Position 564 (E564) interacts with L-isoleucyl-5'-AMP. The 'KMSKS' region signature appears at 605–609; it reads KMSKS. Residue K608 participates in ATP binding. Residues C903, C906, C923, and C926 each contribute to the Zn(2+) site.

Belongs to the class-I aminoacyl-tRNA synthetase family. IleS type 1 subfamily. As to quaternary structure, monomer. The cofactor is Zn(2+).

It localises to the cytoplasm. It carries out the reaction tRNA(Ile) + L-isoleucine + ATP = L-isoleucyl-tRNA(Ile) + AMP + diphosphate. Catalyzes the attachment of isoleucine to tRNA(Ile). As IleRS can inadvertently accommodate and process structurally similar amino acids such as valine, to avoid such errors it has two additional distinct tRNA(Ile)-dependent editing activities. One activity is designated as 'pretransfer' editing and involves the hydrolysis of activated Val-AMP. The other activity is designated 'posttransfer' editing and involves deacylation of mischarged Val-tRNA(Ile). The chain is Isoleucine--tRNA ligase from Shewanella halifaxensis (strain HAW-EB4).